The chain runs to 292 residues: ATP synthase gamma chain (292 aa).

Belongs to the ATPase gamma chain family. F-type ATPases have 2 components, CF(1) - the catalytic core - and CF(0) - the membrane proton channel. CF(1) has five subunits: alpha(3), beta(3), gamma(1), delta(1), epsilon(1). CF(0) has three main subunits: a, b and c.

It is found in the cell inner membrane. In terms of biological role, produces ATP from ADP in the presence of a proton gradient across the membrane. The gamma chain is believed to be important in regulating ATPase activity and the flow of protons through the CF(0) complex. This chain is ATP synthase gamma chain, found in Syntrophobacter fumaroxidans (strain DSM 10017 / MPOB).